Here is a 411-residue protein sequence, read N- to C-terminus: Pyruvate dehydrogenase E1 component subunit alpha, mitochondrial (411 aa).

Residues 1–29 (MFSRAVRLSRAALPIRVASQRVPIAARRS) constitute a mitochondrion transit peptide. The pyruvate site is built by H111, Y137, R138, G184, V186, D215, G216, A217, N244, and Y246. Residues Y137, R138, G184, V186, D215, G216, A217, and N244 each contribute to the thiamine diphosphate site. Position 215 (D215) interacts with Mg(2+). Mg(2+) is bound by residues N244 and Y246. Position 311 (H311) interacts with thiamine diphosphate.

Eukaryotic pyruvate dehydrogenase (PDH) complexes are organized as a core consisting of the oligomeric dihydrolipoamide acetyl-transferase (E2), around which are arranged multiple copies of pyruvate dehydrogenase (E1), dihydrolipoamide dehydrogenase (E3) and protein X (E3BP) bound by non-covalent bonds. The Chaetomium thermophilum PDH complex contains 60 E2 units, 12 E3BP units, about 20 E1 units, and 12 or more E3 units. The units are organized in 1 E2 60-mer, 4 E3BP trimers, about 20 E1 tetramers, and a maximum of 12 E3 dimers. Pyruvate dehydrogenase (E1) is active as a tetramer of 2 alpha and 2 beta subunits. The E3BP trimers are bound inside the icosahedral core with tetrahedral symmetry. Thiamine diphosphate serves as cofactor. The cofactor is Mg(2+).

The protein localises to the mitochondrion. The enzyme catalyses N(6)-[(R)-lipoyl]-L-lysyl-[protein] + pyruvate + H(+) = N(6)-[(R)-S(8)-acetyldihydrolipoyl]-L-lysyl-[protein] + CO2. Functionally, the 10-megadalton pyruvate dehydrogenase complex contains multiple copies of three enzymatic components: pyruvate dehydrogenase (E1), dihydrolipoamide acetyltransferase (E2) and lipoamide dehydrogenase (E3) and catalyzes the overall oxidative decarboxylation of pyruvate to form acetyl-CoA and CO(2). Within the complex, pyruvate and thiamine pyrophosphate (TPP or vitamin B1) are bound by pyruvate dehydrogenase E1 subunits alpha and beta and pyruvate is decarboxylated leading to the 2-carbon hydrohyethyl bound to TPP. The E2 component contains covalently-bound lipoyl cofactors and transfers the hydroxyethyl group from TPP to an oxidized form of covalently bound lipoamide, and the resulting acetyl group is then transferred to free coenzyme A to form acetyl-CoA and reduced dihydrolipoamide-E2. Finally, the flavoprotein dihydrolipoamide dehydrogenase (E3) re-oxidizes the lipoyl group of dihydrolipoamide-E2 to form lipoamide-E2 and NADH. A fourth subunit, E3BP, is responsible for tethering E3 in proximity to the core, forming the entire metabolon. This Chaetomium thermophilum (strain DSM 1495 / CBS 144.50 / IMI 039719) (Thermochaetoides thermophila) protein is Pyruvate dehydrogenase E1 component subunit alpha, mitochondrial.